The sequence spans 207 residues: Small ribosomal subunit protein uS4 (207 aa).

The tract at residues 31-52 is disordered; the sequence is KAKFDSKPGQHGRTSGARTSDY. In terms of domain architecture, S4 RNA-binding spans 97-157; it reads CRLDNVVYRM…DKSKKQARIV (61 aa).

Belongs to the universal ribosomal protein uS4 family. Part of the 30S ribosomal subunit. Contacts protein S5. The interaction surface between S4 and S5 is involved in control of translational fidelity.

In terms of biological role, one of the primary rRNA binding proteins, it binds directly to 16S rRNA where it nucleates assembly of the body of the 30S subunit. Its function is as follows. With S5 and S12 plays an important role in translational accuracy. This chain is Small ribosomal subunit protein uS4, found in Acidovorax sp. (strain JS42).